The chain runs to 332 residues: MAVFTAVSDSDLAQWMRHYALGDVVAFRGIPSGIENSNFFLTTTRGEYVLTIFEKLTAEQLPFYLDLMRHLAGHGVPVPDPVPRDDGALFGTLHGKPAAIVTKLDGAAELAPGVEHCIEVGQMLARMHLAGRDYPRRQPNLRSLPWWQENVPAIVPFVTDAQRALLEGELAHQARFFGSEDYAALPGGPCHCDLFRDNVLFAHAAPDTGHAVRLGGFFDFYFAGCDKWLFDVAVTVNDWCVDLATGVLDTARADALLRAYQTVRPFTAEERRHWSDMLRAGAYRFWVSRLYDFYLPRAAEMLKPHDPGHFERILRERIAHTPALPEIQTACN.

Belongs to the pseudomonas-type ThrB family.

It catalyses the reaction L-homoserine + ATP = O-phospho-L-homoserine + ADP + H(+). The protein operates within amino-acid biosynthesis; L-threonine biosynthesis; L-threonine from L-aspartate: step 4/5. The polypeptide is Homoserine kinase (Burkholderia multivorans (strain ATCC 17616 / 249)).